The chain runs to 60 residues: Large ribosomal subunit protein uL30 (60 aa).

This sequence belongs to the universal ribosomal protein uL30 family. In terms of assembly, part of the 50S ribosomal subunit.

This Moorella thermoacetica (strain ATCC 39073 / JCM 9320) protein is Large ribosomal subunit protein uL30.